The primary structure comprises 162 residues: NADH-quinone oxidoreductase subunit I (162 aa).

2 4Fe-4S ferredoxin-type domains span residues 54-83 and 93-122; these read RRYE…IESE and TRYD…ETQI. The [4Fe-4S] cluster site is built by cysteine 63, cysteine 66, cysteine 69, cysteine 73, cysteine 102, cysteine 105, cysteine 108, and cysteine 112.

It belongs to the complex I 23 kDa subunit family. NDH-1 is composed of 14 different subunits. Subunits NuoA, H, J, K, L, M, N constitute the membrane sector of the complex. [4Fe-4S] cluster is required as a cofactor.

Its subcellular location is the cell inner membrane. It catalyses the reaction a quinone + NADH + 5 H(+)(in) = a quinol + NAD(+) + 4 H(+)(out). Its function is as follows. NDH-1 shuttles electrons from NADH, via FMN and iron-sulfur (Fe-S) centers, to quinones in the respiratory chain. The immediate electron acceptor for the enzyme in this species is believed to be ubiquinone. Couples the redox reaction to proton translocation (for every two electrons transferred, four hydrogen ions are translocated across the cytoplasmic membrane), and thus conserves the redox energy in a proton gradient. This is NADH-quinone oxidoreductase subunit I from Burkholderia mallei (strain NCTC 10247).